The primary structure comprises 266 residues: Small ribosomal subunit protein mS42 (266 aa).

The protein belongs to the mitochondrion-specific ribosomal protein mS42 family. As to quaternary structure, component of the mitochondrial small ribosomal subunit (mt-SSU). Mature yeast 74S mitochondrial ribosomes consist of a small (37S) and a large (54S) subunit. The 37S small subunit contains a 15S ribosomal RNA (15S mt-rRNA) and 34 different proteins. The 54S large subunit contains a 21S rRNA (21S mt-rRNA) and 46 different proteins. mS42 forms a heterodimer with mS43, building a large protuberance adjacent to the mRNA channel exit in the mt-SSU body.

It localises to the mitochondrion. In terms of biological role, component of the mitochondrial ribosome (mitoribosome), a dedicated translation machinery responsible for the synthesis of mitochondrial genome-encoded proteins, including at least some of the essential transmembrane subunits of the mitochondrial respiratory chain. The mitoribosomes are attached to the mitochondrial inner membrane and translation products are cotranslationally integrated into the membrane. The polypeptide is Small ribosomal subunit protein mS42 (RSM26) (Saccharomyces cerevisiae (strain ATCC 204508 / S288c) (Baker's yeast)).